Here is a 205-residue protein sequence, read N- to C-terminus: Recombination protein RecR (205 aa).

A C4-type zinc finger spans residues 64–79 (CRRCFNITVDELCPIC). A Toprim domain is found at 87–182 (TKICVVEEPL…RVTRPARGLP (96 aa)).

It belongs to the RecR family.

May play a role in DNA repair. It seems to be involved in an RecBC-independent recombinational process of DNA repair. It may act with RecF and RecO. In Chloroflexus aggregans (strain MD-66 / DSM 9485), this protein is Recombination protein RecR.